The following is a 118-amino-acid chain: UPF0295 protein BA_0538/GBAA_0538/BAS0506 (118 aa).

Helical transmembrane passes span 12–32 (IRTFALSLVFIGLFIAYLGVF) and 43–63 (FMMVGFLAVIASTVVYFWIGM).

The protein belongs to the UPF0295 family.

The protein resides in the cell membrane. The polypeptide is UPF0295 protein BA_0538/GBAA_0538/BAS0506 (Bacillus anthracis).